The following is a 120-amino-acid chain: Large ribosomal subunit protein bL19c (120 aa).

It belongs to the bacterial ribosomal protein bL19 family.

The protein resides in the plastid. It is found in the chloroplast. The sequence is that of Large ribosomal subunit protein bL19c from Phaeodactylum tricornutum (strain CCAP 1055/1).